The sequence spans 455 residues: Bifunctional protein GlmU (455 aa).

Residues 1–229 (MLNSAMSVVI…ISETEGVNNR (229 aa)) are pyrophosphorylase. UDP-N-acetyl-alpha-D-glucosamine-binding positions include 11 to 14 (LAAG), K25, Q76, 81 to 82 (GT), 103 to 105 (YGD), G140, E154, N169, and N227. D105 is a binding site for Mg(2+). N227 lines the Mg(2+) pocket. Positions 230-250 (LQLSRLERIYQAEQAEKLLLA) are linker. An N-acetyltransferase region spans residues 251–455 (GVMLRDPARF…KQGWQRPVKK (205 aa)). The UDP-N-acetyl-alpha-D-glucosamine site is built by R333 and K351. H363 serves as the catalytic Proton acceptor. UDP-N-acetyl-alpha-D-glucosamine contacts are provided by Y366 and N377. Acetyl-CoA is bound by residues A380, 386–387 (NY), S405, A423, and R440.

In the N-terminal section; belongs to the N-acetylglucosamine-1-phosphate uridyltransferase family. The protein in the C-terminal section; belongs to the transferase hexapeptide repeat family. As to quaternary structure, homotrimer. Mg(2+) serves as cofactor.

It localises to the cytoplasm. The catalysed reaction is alpha-D-glucosamine 1-phosphate + acetyl-CoA = N-acetyl-alpha-D-glucosamine 1-phosphate + CoA + H(+). It catalyses the reaction N-acetyl-alpha-D-glucosamine 1-phosphate + UTP + H(+) = UDP-N-acetyl-alpha-D-glucosamine + diphosphate. The protein operates within nucleotide-sugar biosynthesis; UDP-N-acetyl-alpha-D-glucosamine biosynthesis; N-acetyl-alpha-D-glucosamine 1-phosphate from alpha-D-glucosamine 6-phosphate (route II): step 2/2. It functions in the pathway nucleotide-sugar biosynthesis; UDP-N-acetyl-alpha-D-glucosamine biosynthesis; UDP-N-acetyl-alpha-D-glucosamine from N-acetyl-alpha-D-glucosamine 1-phosphate: step 1/1. Its pathway is bacterial outer membrane biogenesis; LPS lipid A biosynthesis. Functionally, catalyzes the last two sequential reactions in the de novo biosynthetic pathway for UDP-N-acetylglucosamine (UDP-GlcNAc). The C-terminal domain catalyzes the transfer of acetyl group from acetyl coenzyme A to glucosamine-1-phosphate (GlcN-1-P) to produce N-acetylglucosamine-1-phosphate (GlcNAc-1-P), which is converted into UDP-GlcNAc by the transfer of uridine 5-monophosphate (from uridine 5-triphosphate), a reaction catalyzed by the N-terminal domain. The protein is Bifunctional protein GlmU of Salmonella arizonae (strain ATCC BAA-731 / CDC346-86 / RSK2980).